Reading from the N-terminus, the 83-residue chain is Cytochrome b559 subunit alpha (83 aa).

A helical membrane pass occupies residues valine 21–tryptophan 35. Histidine 23 provides a ligand contact to heme.

Belongs to the PsbE/PsbF family. As to quaternary structure, heterodimer of an alpha subunit and a beta subunit. PSII is composed of 1 copy each of membrane proteins PsbA, PsbB, PsbC, PsbD, PsbE, PsbF, PsbH, PsbI, PsbJ, PsbK, PsbL, PsbM, PsbT, PsbX, PsbY, PsbZ, Psb30/Ycf12, at least 3 peripheral proteins of the oxygen-evolving complex and a large number of cofactors. It forms dimeric complexes. Heme b serves as cofactor.

The protein localises to the plastid. It is found in the chloroplast thylakoid membrane. This b-type cytochrome is tightly associated with the reaction center of photosystem II (PSII). PSII is a light-driven water:plastoquinone oxidoreductase that uses light energy to abstract electrons from H(2)O, generating O(2) and a proton gradient subsequently used for ATP formation. It consists of a core antenna complex that captures photons, and an electron transfer chain that converts photonic excitation into a charge separation. The sequence is that of Cytochrome b559 subunit alpha from Oenothera berteroana (Bertero's evening primrose).